A 465-amino-acid polypeptide reads, in one-letter code: Adenosylhomocysteinase (465 aa).

Positions 56, 131, and 191 each coordinate substrate. Residue 192–194 (TTT) participates in NAD(+) binding. Residues K221 and D225 each contribute to the substrate site. Residues N226, 255–260 (GYGDVG), E278, N313, 334–336 (IGH), and N379 contribute to the NAD(+) site.

It belongs to the adenosylhomocysteinase family. Requires NAD(+) as cofactor.

It localises to the cytoplasm. The enzyme catalyses S-adenosyl-L-homocysteine + H2O = L-homocysteine + adenosine. It participates in amino-acid biosynthesis; L-homocysteine biosynthesis; L-homocysteine from S-adenosyl-L-homocysteine: step 1/1. In terms of biological role, may play a key role in the regulation of the intracellular concentration of adenosylhomocysteine. The polypeptide is Adenosylhomocysteinase (Bartonella henselae (strain ATCC 49882 / DSM 28221 / CCUG 30454 / Houston 1) (Rochalimaea henselae)).